Reading from the N-terminus, the 443-residue chain is Methyl-coenzyme M reductase I subunit beta (443 aa).

Y367 contacts coenzyme M. Residue G369 participates in coenzyme B binding.

The protein belongs to the methyl-coenzyme M reductase beta subunit family. In terms of assembly, MCR is a hexamer of two alpha, two beta, and two gamma chains, forming a dimer of heterotrimers. The cofactor is coenzyme F430.

It localises to the cytoplasm. It carries out the reaction coenzyme B + methyl-coenzyme M = methane + coenzyme M-coenzyme B heterodisulfide. The protein operates within one-carbon metabolism; methyl-coenzyme M reduction; methane from methyl-coenzyme M: step 1/1. In terms of biological role, component of the methyl-coenzyme M reductase (MCR) I that catalyzes the reductive cleavage of methyl-coenzyme M (CoM-S-CH3 or 2-(methylthio)ethanesulfonate) using coenzyme B (CoB or 7-mercaptoheptanoylthreonine phosphate) as reductant which results in the production of methane and the mixed heterodisulfide of CoB and CoM (CoM-S-S-CoB). This is the final step in methanogenesis. This is Methyl-coenzyme M reductase I subunit beta (mcrB) from Methanothermobacter thermautotrophicus (strain ATCC 29096 / DSM 1053 / JCM 10044 / NBRC 100330 / Delta H) (Methanobacterium thermoautotrophicum).